Reading from the N-terminus, the 418-residue chain is Ceramide synthase LAC1 (418 aa).

Positions 1 to 14 (MSTIKPSPSNNNLK) are enriched in polar residues. The segment at 1–25 (MSTIKPSPSNNNLKVRSRPRRKSSI) is disordered. Position 2 is an N-acetylserine (Ser-2). Topologically, residues 2-81 (STIKPSPSNN…WFSFREISYR (80 aa)) are cytoplasmic. The segment covering 15–24 (VRSRPRRKSS) has biased composition (basic residues). Residues Ser-23 and Ser-24 each carry the phosphoserine modification. The chain crosses the membrane as a helical span at residues 82 to 102 (HAWIAPLMILIAVYSAYFTSG). Asn-103 carries an N-linked (GlcNAc...) asparagine glycan. Over 103 to 130 (NTTKTNVLHRFVAVSYQIGDTNAYGKGI) the chain is Lumenal. Residues 131–155 (NDLCFVFYYMIFFTFLREFLMDVVI) traverse the membrane as a helical segment. Topologically, residues 156 to 172 (RPFAIRLHVTSKHRIKR) are cytoplasmic. A TLC domain is found at 168 to 385 (HRIKRIMEQM…FRVLYRILWR (218 aa)). Positions 169, 172, and 182 each coordinate fumonisin B1. A helical membrane pass occupies residues 173–194 (IMEQMYAIFYTGVSGPFGIYCM). Residues 195 to 217 (YHSDLWFFNTKAMYRTYPDFTNP) lie on the Lumenal side of the membrane. Residues 218-240 (FLFKVFYLGQAAFWAQQACILVL) form a helical membrane-spanning segment. Hexacosanoate contacts are provided by Tyr-224 and Trp-231. Trp-231 provides a ligand contact to fumonisin B1. Hexacosanoyl-CoA is bound at residue Trp-231. Residues 241–249 (QLEKPRKDH) are Cytoplasmic-facing. Residues 250-268 (NELTFHHIVTLLLIWSSYV) traverse the membrane as a helical segment. His-255 contributes to the fumonisin B1 binding site. Residues His-255, Thr-259, Leu-262, Ile-263, Ser-265, Ser-266, Phe-269, Phe-271, Met-274, Gly-275, Ile-278, Tyr-279, Met-282, Asp-283, and Asp-286 each contribute to the hexacosanoate site. Residues His-255, Thr-259, and Leu-262 each contribute to the hexacosanoyl-CoA site. Hexacosanoyl-CoA contacts are provided by Ser-265 and Ser-266. Over 269-273 (FHFTK) the chain is Lumenal. Phe-271, Met-274, Gly-275, Ile-278, Tyr-279, and Met-282 together coordinate hexacosanoyl-CoA. Residues 274–295 (MGLPIYITMDVSDFLLSFSKTL) form a helical membrane-spanning segment. Asp-286, Leu-289, Lys-293, Asn-296, Tyr-297, Ala-303, Phe-304, Phe-307, and Trp-314 together coordinate fumonisin B1. Positions 286, 289, 293, and 296 each coordinate hexacosanoyl-CoA. Topologically, residues 296–305 (NYLDSGLAFF) are cytoplasmic. A helical membrane pass occupies residues 306–334 (SFAIFVVAWIYLRHYINLKILWSVLTQFR). Phe-307 provides a ligand contact to hexacosanoyl-CoA. Positions 318, 343, 348, 352, 353, 356, 357, 360, 361, and 371 each coordinate hexacosanoate. Residue Arg-318 participates in hexacosanoyl-CoA binding. Residues 335–353 (TEGNYVLNFATQQYKCWIS) are Lumenal-facing. Residues Tyr-348, Ile-352, Ser-353, Ile-356, Val-357, and Leu-360 each coordinate hexacosanoyl-CoA. Residues 354–382 (LPIVFVLIGALQLVNLYWLFLIFRVLYRI) form a helical membrane-spanning segment. 5 residues coordinate fumonisin B1: Trp-371, Ile-375, Val-378, Ile-382, and Arg-385. Trp-371 is a hexacosanoyl-CoA binding site. Residues 383 to 418 (LWRGILKDDRSDSESDEESDESSTTPTDSTPTKKDI) are Cytoplasmic-facing. The segment at 390-418 (DDRSDSESDEESDESSTTPTDSTPTKKDI) is disordered.

This sequence belongs to the sphingosine N-acyltransferase family. Component of the ceramide synthase complex composed of at least LAC1, LAG1 and LIP1. Forms a heterotetrameric complex, where one unit of the LIP1 homodimer interacts with LAC1 and the other with either LAC1 or LAG1. In terms of processing, phosphorylated; phosphorylation is induced upon disruption of sphingolipid synthesis. Phosphorylation is inhibited by exogenous addition of phytosphingosine.

It localises to the endoplasmic reticulum membrane. It carries out the reaction a very long-chain fatty acyl-CoA + a sphingoid base = an N-(very-long-chain fatty acyl)-sphingoid base + CoA + H(+). It catalyses the reaction hexacosanoyl-CoA + sphinganine = N-hexacosanoylsphinganine + CoA + H(+). The catalysed reaction is eicosanoyl-CoA + sphinganine = N-eicosanoylsphinganine + CoA + H(+). The enzyme catalyses a fatty acyl-CoA + sphinganine = an N-acylsphinganine + CoA + H(+). It carries out the reaction (4R)-hydroxysphinganine + a fatty acyl-CoA = an N-acyl-(4R)-4-hydroxysphinganine + CoA + H(+). It participates in lipid metabolism; sphingolipid metabolism. As part of the ceramide synthase complex, inhibited by the sphinganine analog mycotoxin, fumonisin B1 (FB1). Activated by ACB1, as part of the ceramide synthase complex. Functionally, component of the ceramide synthase complex that catalyzes the transfer of the acyl chain from acyl-CoA to a sphingoid base, with high selectivity toward hexacosanoyl-CoA (C26:0-CoA). N-acylates sphinganine and phytosphingosine bases to form dihydroceramides and phytoceramides, respectively. Redundant with LAG1. Facilitates ER-to-Golgi transport of GPI-anchored proteins. Has a lower affinity for phytosphingosine (PHS) than dihydrosphingosine (DHS); PHS is required for the synthesis of phytoceramides and the formation of nuclear envelopes. Along with LAG1, plays a role in pheromone-induced MAP kinase-activation of mating and formation of diploid cells. May also play a role, together with LAG1, in the polarized membrane distribution of phosphatidylinositol 4,5 biphosphate required for STE5 localization to the plasma membrane. The chain is Ceramide synthase LAC1 (LAC1) from Saccharomyces cerevisiae (strain ATCC 204508 / S288c) (Baker's yeast).